A 389-amino-acid chain; its full sequence is Succinate--CoA ligase [ADP-forming] subunit beta (389 aa).

The ATP-grasp domain maps to Arg9–Lys236. ATP contacts are provided by residues Lys45, Gly52–Gly54, Ala94, and Glu99. The Mg(2+) site is built by Asn191 and Asp205. Residues Asn256 and Gly318–Thr320 each bind substrate.

The protein belongs to the succinate/malate CoA ligase beta subunit family. In terms of assembly, heterotetramer of two alpha and two beta subunits. Requires Mg(2+) as cofactor.

It catalyses the reaction succinate + ATP + CoA = succinyl-CoA + ADP + phosphate. It carries out the reaction GTP + succinate + CoA = succinyl-CoA + GDP + phosphate. It functions in the pathway carbohydrate metabolism; tricarboxylic acid cycle; succinate from succinyl-CoA (ligase route): step 1/1. Functionally, succinyl-CoA synthetase functions in the citric acid cycle (TCA), coupling the hydrolysis of succinyl-CoA to the synthesis of either ATP or GTP and thus represents the only step of substrate-level phosphorylation in the TCA. The beta subunit provides nucleotide specificity of the enzyme and binds the substrate succinate, while the binding sites for coenzyme A and phosphate are found in the alpha subunit. This chain is Succinate--CoA ligase [ADP-forming] subunit beta, found in Micrococcus luteus (strain ATCC 4698 / DSM 20030 / JCM 1464 / CCM 169 / CCUG 5858 / IAM 1056 / NBRC 3333 / NCIMB 9278 / NCTC 2665 / VKM Ac-2230) (Micrococcus lysodeikticus).